Here is a 684-residue protein sequence, read N- to C-terminus: MAIPTLEQKLTWLKPAPASSRELDLAAQIDPAQFEIGFQRTNDILDEGMDVFVRSCRCAMGVAGDSLVAIMTADGDIVNGSCGTYLHAVIPPLIIKYILETYGDEIRDGDLWFANDAVYGGVHNPDQMVCMPVYYEGKLVAWTAALVHTTETGAIEPGGMPVSATTRFEEGMNLPPMRIGENFKLREDVVSMFVAFGLRAPSMIAVDLKARCTTADRVRTRIIELCEREGADYVTGLFRKMLQVAEAGARELIEQWPDGKYRCVTFSDAVGLKQGLVRSCYMTLEKKGDRMLVDLSETGPETPSPYNAHPQAAIAHFSNYIYEYLFHSLPISNGTFANIDFKFGKNTCLSPDPRAATSCSVMISTGVMSAVHNACAKAMFSTSLWKQSGASMGNGGNALVLAGQNQWGSSFADMLAYSINTEGQGARPTEDGMDAFGFPWCVFGRAPNTESVENEFPLLVPLSNHWKDSCGHGKYRGGVGTAQVWVAHHVPELYMMAIADNTKLQTPQPLFGGYAPCTVPGIGIRNANIKELMAEGSDKIKLDVETLLAERTIDGKYEIEFQGRSVRPYSNGEVVTFAFSCGGTGYGDPLDRDPKSVEVDLLKGVLTEQTAQNIYKVKWDANLRRVDLDETSRLRAAEHDARRKRGVPYEQFEREWLKQRPDDEILKYYGTWPDAKVAQPLLRA.

Belongs to the oxoprolinase family. In terms of assembly, acetophenone carboxylase consists of five subunits; a heterooctameric subcomplex of two alpha (Apc1), two beta (Apc2), two gamma (Apc3) and two delta (Apc4) subunits assembles with the epsilon (Apc5) subunit in an unknown stoichiometry. It depends on Mg(2+) as a cofactor. Mn(2+) serves as cofactor.

The protein resides in the cytoplasm. The enzyme catalyses acetophenone + hydrogencarbonate + 2 ATP + H2O = 3-oxo-3-phenylpropanoate + 2 ADP + 2 phosphate + 2 H(+). With respect to regulation, inhibited by zinc ions, carbamoylphosphate and beta,gamma-imido-ATP. Catalyzes the carboxylation of acetophenone to form 3-oxo-3-phenylpropanoate (benzoylacetate) in the anaerobic catabolism of ethylbenzene. Also carboxylates propiophenone at the same rate and 4-acetyl-pyridine at lower rates. The sequence is that of Acetophenone carboxylase delta subunit (apc4) from Aromatoleum aromaticum (strain DSM 19018 / LMG 30748 / EbN1) (Azoarcus sp. (strain EbN1)).